The chain runs to 541 residues: DNA polymerase epsilon subunit B (541 aa).

It belongs to the DNA polymerase epsilon subunit B family. In terms of assembly, heterotetramer. Consists of four subunits: POL2, DPB2, DPB3 and DPB4.

The protein localises to the nucleus. Its function is as follows. As accessory component of the DNA polymerase epsilon (DNA polymerase II) participates in chromosomal DNA replication. This Cryptococcus neoformans var. neoformans serotype D (strain B-3501A) (Filobasidiella neoformans) protein is DNA polymerase epsilon subunit B (DPB2).